Reading from the N-terminus, the 132-residue chain is Small ribosomal subunit protein uS8 (132 aa).

Belongs to the universal ribosomal protein uS8 family. Part of the 30S ribosomal subunit. Contacts proteins S5 and S12.

In terms of biological role, one of the primary rRNA binding proteins, it binds directly to 16S rRNA central domain where it helps coordinate assembly of the platform of the 30S subunit. The sequence is that of Small ribosomal subunit protein uS8 from Brucella anthropi (strain ATCC 49188 / DSM 6882 / CCUG 24695 / JCM 21032 / LMG 3331 / NBRC 15819 / NCTC 12168 / Alc 37) (Ochrobactrum anthropi).